The chain runs to 803 residues: MSLLHIAVILPLIFALIIPILYRFFKKIHLGWFVLPIPVVLFIYFLSLISTTQSGNTVIKTLNWMPHIGMNFDLYLDGLSILFSLLITGIGSLVVLYSIGYLSKSEQLGNFYCYLLLFMGAMLGVVLSDNLIILYLFWELTSFSSFLLISFWREKKASIYGAQKSLIITVFGGLSLLGGFILISLAGDSLSLHELIANASEIQHSPLFIFAMVLIMLGAFTKSAQVPFYIWLPDAMEAPTPVSAYLHSATMVKAGLYLVARVTPLFAISQGWIWTITLVGLITLFWASLNATKQQDLKGILAFSTVSQLGMIMSMLGIGAVSYHFEGSQSQLYIAGFTAAVFHLVNHATFKGALFMITGAVDHVTGTRDVKKLGGLLTIMPISFTITVITALSMAGIPPFNGFLSKEKFLEAMIEISHANVFSLDTLGIVFPILAIVGSIFTFVYSIKFIMYIFFGKHQPNALPKKAHEASILMLLSPIILAVLVVVFGLFPGLLTQSIVEPATTAISGMSNVNAEFHLFHGITPAFISTLIIWILGILLLLTFSYWIRLLHAQPTRLTLNHWYDSTGKYLPNYSANMTNSYVNGYVRDSLVIIFGMLIVVTIVTLLSVPFDFNFKDINNIHIYEIAILILLIIAAFMVVIAKSRLFSVIMLGVVGYSVSVLFVFFKAPDLALTQFVVESISTALFLLCFYHLPNLNRYNETRSFKLTNALISIGVGLVVIILGLIAYGNRHFTSIGEYYKAHVYDLAHGKNMVNVILVDFRGMDTLFESSVLGIAGLGVYTMIKLRRKHQSSEVKSDEQAEQ.

The next 19 helical transmembrane spans lie at 1–21 (MSLLHIAVILPLIFALIIPIL), 30–50 (LGWFVLPIPVVLFIYFLSLIS), 79–99 (LSILFSLLITGIGSLVVLYSI), 117–137 (LFMGAMLGVVLSDNLIILYLF), 166–186 (LIITVFGGLSLLGGFILISLA), 208–228 (FIFAMVLIMLGAFTKSAQVPF), 265–285 (LFAISQGWIWTITLVGLITLF), 300–320 (ILAFSTVSQLGMIMSMLGIGA), 337–357 (FTAAVFHLVNHATFKGALFMI), 377–397 (LTIMPISFTITVITALSMAGI), 427–447 (LGIVFPILAIVGSIFTFVYSI), 472–492 (ILMLLSPIILAVLVVVFGLFP), 522–542 (GITPAFISTLIIWILGILLLL), 591–611 (LVIIFGMLIVVTIVTLLSVPF), 621–641 (IHIYEIAILILLIIAAFMVVI), 646–666 (LFSVIMLGVVGYSVSVLFVFF), 671–691 (LALTQFVVESISTALFLLCFY), 707–727 (LTNALISIGVGLVVIILGLIA), and 764–784 (MDTLFESSVLGIAGLGVYTMI).

It belongs to the CPA3 antiporters (TC 2.A.63) subunit A family. May form a heterooligomeric complex that consists of seven subunits: mnhA1, mnhB1, mnhC1, mnhD1, mnhE1, mnhF1 and mnhG1.

The protein localises to the cell membrane. In terms of biological role, mnh complex is a Na(+)/H(+) antiporter involved in Na(+) excretion. The sequence is that of Na(+)/H(+) antiporter subunit A1 (mnhA1) from Staphylococcus haemolyticus (strain JCSC1435).